A 521-amino-acid polypeptide reads, in one-letter code: Ribonuclease Y (521 aa).

Residues 3–23 (VSIWMLVITVLAAVAAYFAGS) form a helical membrane-spanning segment. Positions 211–271 (TVSVVPLPSD…VRREVARMSL (61 aa)) constitute a KH domain. The 94-residue stretch at 337 to 430 (IYQHSLEVAF…VQAADALSGA (94 aa)) folds into the HD domain.

It belongs to the RNase Y family.

It is found in the cell membrane. Endoribonuclease that initiates mRNA decay. This chain is Ribonuclease Y, found in Pelobacter propionicus (strain DSM 2379 / NBRC 103807 / OttBd1).